Consider the following 284-residue polypeptide: Co-chaperone protein DjlA (284 aa).

Topologically, residues 1–6 (MHIFGK) are periplasmic. Residues 7–30 (ILGAFFGLLLGGPFGLLFGLFIGH) form a helical membrane-spanning segment. Residues 31 to 284 (QFDKARRLSQ…DLIKKVKGFK (254 aa)) lie on the Cytoplasmic side of the membrane. Residues 218-284 (DAYKILDVSP…DLIKKVKGFK (67 aa)) enclose the J domain.

In terms of assembly, homodimer.

The protein resides in the cell inner membrane. Functionally, regulatory DnaK co-chaperone. Direct interaction between DnaK and DjlA is needed for the induction of the wcaABCDE operon, involved in the synthesis of a colanic acid polysaccharide capsule, possibly through activation of the RcsB/RcsC phosphotransfer signaling pathway. The colanic acid capsule may help the bacterium survive conditions outside the host. In Vibrio parahaemolyticus serotype O3:K6 (strain RIMD 2210633), this protein is Co-chaperone protein DjlA.